Consider the following 527-residue polypeptide: Phosphoenolpyruvate carboxykinase (ATP) (527 aa).

Substrate-binding residues include R56, Y192, and K198. ATP contacts are provided by residues K198, H217, and 233–241 (GLSGTGKTT). K198 and H217 together coordinate Mn(2+). D254 is a Mn(2+) binding site. Residues E282, R319, and T444 each contribute to the ATP site. R319 lines the substrate pocket.

This sequence belongs to the phosphoenolpyruvate carboxykinase (ATP) family. Mn(2+) serves as cofactor.

The protein localises to the cytoplasm. The enzyme catalyses oxaloacetate + ATP = phosphoenolpyruvate + ADP + CO2. It functions in the pathway carbohydrate biosynthesis; gluconeogenesis. In terms of biological role, involved in the gluconeogenesis. Catalyzes the conversion of oxaloacetate (OAA) to phosphoenolpyruvate (PEP) through direct phosphoryl transfer between the nucleoside triphosphate and OAA. This chain is Phosphoenolpyruvate carboxykinase (ATP), found in Bacillus velezensis (strain DSM 23117 / BGSC 10A6 / LMG 26770 / FZB42) (Bacillus amyloliquefaciens subsp. plantarum).